Consider the following 542-residue polypeptide: Glutamyl-tRNA(Gln) amidotransferase subunit B, mitochondrial (542 aa).

It belongs to the GatB/GatE family. GatB subfamily. As to quaternary structure, subunit of the heterotrimeric GatFAB amidotransferase (AdT) complex, composed of A, B and F subunits.

The protein localises to the mitochondrion. It catalyses the reaction L-glutamyl-tRNA(Gln) + L-glutamine + ATP + H2O = L-glutaminyl-tRNA(Gln) + L-glutamate + ADP + phosphate + H(+). In terms of biological role, allows the formation of correctly charged Gln-tRNA(Gln) through the transamidation of misacylated Glu-tRNA(Gln) in the mitochondria. The reaction takes place in the presence of glutamine and ATP through an activated gamma-phospho-Glu-tRNA(Gln). The polypeptide is Glutamyl-tRNA(Gln) amidotransferase subunit B, mitochondrial (Candida glabrata (strain ATCC 2001 / BCRC 20586 / JCM 3761 / NBRC 0622 / NRRL Y-65 / CBS 138) (Yeast)).